We begin with the raw amino-acid sequence, 89 residues long: Small ribosomal subunit protein bS20 (89 aa).

The protein belongs to the bacterial ribosomal protein bS20 family.

Its function is as follows. Binds directly to 16S ribosomal RNA. The protein is Small ribosomal subunit protein bS20 of Hahella chejuensis (strain KCTC 2396).